A 697-amino-acid polypeptide reads, in one-letter code: Elongation factor G (697 aa).

Residues 10-285 form the tr-type G domain; that stretch reads AKTRNIGIMA…GVIDYLPSPL (276 aa). GTP-binding positions include 19–26, 83–87, and 137–140; these read AHIDAGKT, DTPGH, and NKMD.

The protein belongs to the TRAFAC class translation factor GTPase superfamily. Classic translation factor GTPase family. EF-G/EF-2 subfamily.

The protein resides in the cytoplasm. In terms of biological role, catalyzes the GTP-dependent ribosomal translocation step during translation elongation. During this step, the ribosome changes from the pre-translocational (PRE) to the post-translocational (POST) state as the newly formed A-site-bound peptidyl-tRNA and P-site-bound deacylated tRNA move to the P and E sites, respectively. Catalyzes the coordinated movement of the two tRNA molecules, the mRNA and conformational changes in the ribosome. The sequence is that of Elongation factor G from Lactobacillus helveticus (strain DPC 4571).